The following is a 349-amino-acid chain: Divinyl chlorophyll a/b light-harvesting protein PcbE (349 aa).

A run of 6 helical transmembrane segments spans residues 27 to 47 (FIAA…GSTL), 65 to 85 (IFLA…AWTG), 88 to 108 (VASI…GGLL), 201 to 221 (VLGG…FHIA), 241 to 261 (AILS…AFWC), and 308 to 328 (LANV…WHAL).

The protein belongs to the PsbB/PsbC family. IsiA/Pcb subfamily. As to quaternary structure, the antenna complex consists of divinyl chlorophylls (a and b) and divinyl chlorophyll a/b binding proteins and binds more divinyl chlorophyll b than does the antenna complex from high-light-adapted Prochlorococcus. The cofactor is divinyl chlorophyll a. Divinyl chlorophyll b serves as cofactor.

It localises to the cellular thylakoid membrane. Functionally, the antenna complex functions as a light receptor, it captures and delivers excitation energy to photosystems II and I. The Prochlorales pcb genes are not related to higher plant LHCs. The polypeptide is Divinyl chlorophyll a/b light-harvesting protein PcbE (pcbE) (Prochlorococcus marinus (strain NATL2A)).